We begin with the raw amino-acid sequence, 403 residues long: Argininosuccinate synthase (403 aa).

Residues 12–20 (AYSGGLDTS) and alanine 39 each bind ATP. Positions 90 and 95 each coordinate L-citrulline. Residue glycine 120 participates in ATP binding. L-aspartate-binding residues include threonine 122, asparagine 126, and aspartate 127. L-citrulline is bound at residue asparagine 126. 5 residues coordinate L-citrulline: arginine 130, serine 182, serine 191, glutamate 267, and tyrosine 279.

The protein belongs to the argininosuccinate synthase family. Type 1 subfamily. In terms of assembly, homotetramer.

It localises to the cytoplasm. The catalysed reaction is L-citrulline + L-aspartate + ATP = 2-(N(omega)-L-arginino)succinate + AMP + diphosphate + H(+). It participates in amino-acid biosynthesis; L-arginine biosynthesis; L-arginine from L-ornithine and carbamoyl phosphate: step 2/3. The protein is Argininosuccinate synthase of Vesicomyosocius okutanii subsp. Calyptogena okutanii (strain HA).